The following is a 403-amino-acid chain: Aromatic-L-amino-acid decarboxylase (403 aa).

Threonine 8 contacts substrate. 2 residues coordinate pyridoxal 5'-phosphate: alanine 74 and serine 75. Histidine 118 provides a ligand contact to substrate. Histidine 118 is an active-site residue. Pyridoxal 5'-phosphate-binding residues include aspartate 197 and asparagine 226. Lysine 229 is subject to N6-(pyridoxal phosphate)lysine. The segment at 250-276 (NAFNVDPLYLKHDMQGSAPDYRHWQIP) is disordered.

The protein belongs to the group II decarboxylase family. In terms of assembly, homodimer. The cofactor is pyridoxal 5'-phosphate.

It carries out the reaction L-dopa + H(+) = dopamine + CO2. It catalyses the reaction 5-hydroxy-L-tryptophan + H(+) = serotonin + CO2. Its function is as follows. Catalyzes the decarboxylation of L-3,4-dihydroxyphenylalanine (L-DOPA) to dopamine and L-5-hydroxytryptophan (5-HTP) to serotonin. Catalyzes the formation of serotonin more efficiently than dopamine. Displays no activity to tyrosine. Variation in the synthesis of bioamines may be a factor contributing to natural variation in life span. This Drosophila lebanonensis (Fruit fly) protein is Aromatic-L-amino-acid decarboxylase (Ddc).